Consider the following 448-residue polypeptide: Bifunctional protein GlmU (448 aa).

Residues 1 to 230 are pyrophosphorylase; sequence MRSCLSIVLA…FDNIVGINNC (230 aa). Residues 9 to 12, K23, Q76, and 81 to 82 each bind UDP-N-acetyl-alpha-D-glucosamine; these read LAAG and GT. Mg(2+) is bound at residue D106. UDP-N-acetyl-alpha-D-glucosamine-binding residues include G142, E156, N171, and N228. N228 is a Mg(2+) binding site. A linker region spans residues 231-251; it reads FELFEADSLWQKRKARDLMLS. Residues 252-448 are N-acetyltransferase; it reads GVTILKPETV…VRLSGNQQKK (197 aa). UDP-N-acetyl-alpha-D-glucosamine contacts are provided by R317 and K335. Catalysis depends on H347, which acts as the Proton acceptor. Y350 and N361 together coordinate UDP-N-acetyl-alpha-D-glucosamine. Acetyl-CoA is bound by residues A364, 370–371, S389, S407, and R424; that span reads NY.

In the N-terminal section; belongs to the N-acetylglucosamine-1-phosphate uridyltransferase family. This sequence in the C-terminal section; belongs to the transferase hexapeptide repeat family. As to quaternary structure, homotrimer. It depends on Mg(2+) as a cofactor.

It is found in the cytoplasm. It carries out the reaction alpha-D-glucosamine 1-phosphate + acetyl-CoA = N-acetyl-alpha-D-glucosamine 1-phosphate + CoA + H(+). The enzyme catalyses N-acetyl-alpha-D-glucosamine 1-phosphate + UTP + H(+) = UDP-N-acetyl-alpha-D-glucosamine + diphosphate. Its pathway is nucleotide-sugar biosynthesis; UDP-N-acetyl-alpha-D-glucosamine biosynthesis; N-acetyl-alpha-D-glucosamine 1-phosphate from alpha-D-glucosamine 6-phosphate (route II): step 2/2. It functions in the pathway nucleotide-sugar biosynthesis; UDP-N-acetyl-alpha-D-glucosamine biosynthesis; UDP-N-acetyl-alpha-D-glucosamine from N-acetyl-alpha-D-glucosamine 1-phosphate: step 1/1. It participates in bacterial outer membrane biogenesis; LPS lipid A biosynthesis. Catalyzes the last two sequential reactions in the de novo biosynthetic pathway for UDP-N-acetylglucosamine (UDP-GlcNAc). The C-terminal domain catalyzes the transfer of acetyl group from acetyl coenzyme A to glucosamine-1-phosphate (GlcN-1-P) to produce N-acetylglucosamine-1-phosphate (GlcNAc-1-P), which is converted into UDP-GlcNAc by the transfer of uridine 5-monophosphate (from uridine 5-triphosphate), a reaction catalyzed by the N-terminal domain. In Bartonella quintana (strain Toulouse) (Rochalimaea quintana), this protein is Bifunctional protein GlmU.